The sequence spans 647 residues: ATP-binding protein Uup (647 aa).

2 ABC transporter domains span residues M1 to A253 and F320 to K546. ATP-binding positions include G36–S43 and G352–T359. Positions A545–S563 are enriched in basic and acidic residues. The disordered stretch occupies residues A545–K569. A C-terminal domain (CTD), binds DNA region spans residues N559 to A647.

It belongs to the ABC transporter superfamily. ABCF family. Uup subfamily.

Its subcellular location is the cytoplasm. It carries out the reaction ATP + H2O = ADP + phosphate + H(+). In terms of biological role, probably plays a role in ribosome assembly or function. May be involved in resolution of branched DNA intermediates that result from template switching in postreplication gaps. Binds DNA and has ATPase activity. This chain is ATP-binding protein Uup, found in Haemophilus influenzae (strain ATCC 51907 / DSM 11121 / KW20 / Rd).